Here is a 546-residue protein sequence, read N- to C-terminus: Probable protein kinase UbiB (546 aa).

The 379-residue stretch at D124–L502 folds into the Protein kinase domain. Residues L130–V138 and K153 contribute to the ATP site. The Proton acceptor role is filled by D288. Helical transmembrane passes span Y501–P521 and D522–W542.

The protein belongs to the ABC1 family. UbiB subfamily.

It localises to the cell inner membrane. The protein operates within cofactor biosynthesis; ubiquinone biosynthesis [regulation]. In terms of biological role, is probably a protein kinase regulator of UbiI activity which is involved in aerobic coenzyme Q (ubiquinone) biosynthesis. The chain is Probable protein kinase UbiB from Enterobacter sp. (strain 638).